The chain runs to 817 residues: Lon protease (817 aa).

A Lon N-terminal domain is found at 22–216 (VPIMPLSDGV…KVTRQLNHQL (195 aa)). Residue 368-375 (GPPGTGKT) coordinates ATP. A Lon proteolytic domain is found at 604–785 (ALTPGVVMGL…GDVLELALNG (182 aa)). Active-site residues include Ser691 and Lys734. A disordered region spans residues 784–817 (NGNGATKKKKKTPAKSKKSTKPAAKKTAARKSRK). Over residues 789–817 (TKKKKKTPAKSKKSTKPAAKKTAARKSRK) the composition is skewed to basic residues.

Belongs to the peptidase S16 family. Homohexamer. Organized in a ring with a central cavity.

Its subcellular location is the cytoplasm. The enzyme catalyses Hydrolysis of proteins in presence of ATP.. Functionally, ATP-dependent serine protease that mediates the selective degradation of mutant and abnormal proteins as well as certain short-lived regulatory proteins. Required for cellular homeostasis and for survival from DNA damage and developmental changes induced by stress. Degrades polypeptides processively to yield small peptide fragments that are 5 to 10 amino acids long. Binds to DNA in a double-stranded, site-specific manner. The chain is Lon protease from Desulfosudis oleivorans (strain DSM 6200 / JCM 39069 / Hxd3) (Desulfococcus oleovorans).